A 204-amino-acid polypeptide reads, in one-letter code: U1 small nuclear ribonucleoprotein C (204 aa).

The segment at 4–36 (FFCDYCDVYLTHDSMSVRKAHNSGRNHLRNVVD) adopts a Matrin-type zinc-finger fold. Residues 65 to 204 (ANPMLPQNQP…GAGAPGHEKR (140 aa)) form a disordered region. Pro residues-rich tracts occupy residues 77–154 (GFPP…PGAP) and 166–192 (APPPFPGLPGMPPPGQGFPPGGPPGFA).

This sequence belongs to the U1 small nuclear ribonucleoprotein C family. U1 snRNP is composed of the 7 core Sm proteins B/B', D1, D2, D3, E, F and G that assemble in a heptameric protein ring on the Sm site of the small nuclear RNA to form the core snRNP, and at least 3 U1 snRNP-specific proteins U1-70K, U1-A and U1-C. U1-C interacts with U1 snRNA and the 5' splice-site region of the pre-mRNA.

It is found in the nucleus. Functionally, component of the spliceosomal U1 snRNP, which is essential for recognition of the pre-mRNA 5' splice-site and the subsequent assembly of the spliceosome. U1-C is directly involved in initial 5' splice-site recognition for both constitutive and regulated alternative splicing. The interaction with the 5' splice-site seems to precede base-pairing between the pre-mRNA and the U1 snRNA. Stimulates commitment or early (E) complex formation by stabilizing the base pairing of the 5' end of the U1 snRNA and the 5' splice-site region. The chain is U1 small nuclear ribonucleoprotein C from Fusarium vanettenii (strain ATCC MYA-4622 / CBS 123669 / FGSC 9596 / NRRL 45880 / 77-13-4) (Fusarium solani subsp. pisi).